The chain runs to 552 residues: Formate--tetrahydrofolate ligase (552 aa).

65–72 (TPAGEGKT) is a binding site for ATP.

The protein belongs to the formate--tetrahydrofolate ligase family.

It catalyses the reaction (6S)-5,6,7,8-tetrahydrofolate + formate + ATP = (6R)-10-formyltetrahydrofolate + ADP + phosphate. It participates in one-carbon metabolism; tetrahydrofolate interconversion. The protein is Formate--tetrahydrofolate ligase of Fervidobacterium nodosum (strain ATCC 35602 / DSM 5306 / Rt17-B1).